The sequence spans 522 residues: Ribose import ATP-binding protein RbsA 1 (522 aa).

2 consecutive ABC transporter domains span residues 8-243 (LRIE…GRSI) and 249-496 (RERP…VSTN). 40 to 47 (GENGAGKS) provides a ligand contact to ATP. The interval 492–522 (AVSTNQYKPDKSDKPDASAGKTDQKEAPRGH) is disordered. Residues 499–522 (KPDKSDKPDASAGKTDQKEAPRGH) show a composition bias toward basic and acidic residues.

This sequence belongs to the ABC transporter superfamily. Ribose importer (TC 3.A.1.2.1) family. As to quaternary structure, the complex is composed of an ATP-binding protein (RbsA), two transmembrane proteins (RbsC) and a solute-binding protein (RbsB).

The protein localises to the cell membrane. It carries out the reaction D-ribose(out) + ATP + H2O = D-ribose(in) + ADP + phosphate + H(+). In terms of biological role, part of the ABC transporter complex RbsABC involved in ribose import. Responsible for energy coupling to the transport system. The sequence is that of Ribose import ATP-binding protein RbsA 1 from Streptomyces avermitilis (strain ATCC 31267 / DSM 46492 / JCM 5070 / NBRC 14893 / NCIMB 12804 / NRRL 8165 / MA-4680).